A 586-amino-acid chain; its full sequence is A-type ATP synthase subunit A (586 aa).

Position 238-245 (238-245) interacts with ATP; it reads GPFGSGKT.

The protein belongs to the ATPase alpha/beta chains family. As to quaternary structure, has multiple subunits with at least A(3), B(3), C, D, E, F, H, I and proteolipid K(x).

It localises to the cell membrane. The enzyme catalyses ATP + H2O + 4 H(+)(in) = ADP + phosphate + 5 H(+)(out). Component of the A-type ATP synthase that produces ATP from ADP in the presence of a proton gradient across the membrane. The A chain is the catalytic subunit. In Haloferax volcanii (strain ATCC 29605 / DSM 3757 / JCM 8879 / NBRC 14742 / NCIMB 2012 / VKM B-1768 / DS2) (Halobacterium volcanii), this protein is A-type ATP synthase subunit A.